We begin with the raw amino-acid sequence, 181 residues long: Adenylyl-sulfate kinase (181 aa).

12–19 provides a ligand contact to ATP; the sequence is GLSGAGKT. Ser86 serves as the catalytic Phosphoserine intermediate.

The protein belongs to the APS kinase family.

It catalyses the reaction adenosine 5'-phosphosulfate + ATP = 3'-phosphoadenylyl sulfate + ADP + H(+). It participates in sulfur metabolism; hydrogen sulfide biosynthesis; sulfite from sulfate: step 2/3. Catalyzes the synthesis of activated sulfate. In Rippkaea orientalis (strain PCC 8801 / RF-1) (Cyanothece sp. (strain PCC 8801)), this protein is Adenylyl-sulfate kinase.